Reading from the N-terminus, the 310-residue chain is GMP synthase [glutamine-hydrolyzing] subunit B (310 aa).

The GMPS ATP-PPase domain occupies 2-185 (FDPKKFIDEA…LGLPDSIVYR (184 aa)). 29 to 35 (SGGVDSS) provides a ligand contact to ATP.

In terms of assembly, heterodimer composed of a glutamine amidotransferase subunit (A) and a GMP-binding subunit (B).

The catalysed reaction is XMP + L-glutamine + ATP + H2O = GMP + L-glutamate + AMP + diphosphate + 2 H(+). Its pathway is purine metabolism; GMP biosynthesis; GMP from XMP (L-Gln route): step 1/1. Catalyzes the synthesis of GMP from XMP. The sequence is that of GMP synthase [glutamine-hydrolyzing] subunit B (guaAB) from Methanocaldococcus jannaschii (strain ATCC 43067 / DSM 2661 / JAL-1 / JCM 10045 / NBRC 100440) (Methanococcus jannaschii).